We begin with the raw amino-acid sequence, 161 residues long: General odorant-binding protein 2 (161 aa).

An N-terminal signal peptide occupies residues 1 to 20 (MVNRLILMVVVVFITDSVMG). 3 disulfide bridges follow: Cys-39–Cys-74, Cys-70–Cys-128, and Cys-117–Cys-137.

This sequence belongs to the PBP/GOBP family. In terms of assembly, homodimer. As to expression, olfactory tissue; expressed by the glia-like support cells that ensheathe the sensory neurons and line the base of the sensillum lumen.

Its function is as follows. Present in the aqueous fluid surrounding olfactory sensory dendrites and are thought to aid in the capture and transport of hydrophobic odorants into and through this fluid. The protein is General odorant-binding protein 2 (GOBP2) of Manduca sexta (Tobacco hawkmoth).